We begin with the raw amino-acid sequence, 582 residues long: ATP-dependent lipid A-core flippase (582 aa).

Helical transmembrane passes span 16–36 (LWPT…ALIL), 64–84 (LMWM…TSYI), 153–173 (IIGL…ILIV), 253–273 (PIIQ…ASFP), and 275–295 (VMDS…IALM). The region spanning 28-310 (IVAGVALILN…LTNVNAQFQR (283 aa)) is the ABC transmembrane type-1 domain. Positions 342–578 (VEFRNVTFTY…RGVYAQLHKM (237 aa)) constitute an ABC transporter domain. Residue 376–383 (GRSGSGKS) coordinates ATP.

Belongs to the ABC transporter superfamily. Lipid exporter (TC 3.A.1.106) family. In terms of assembly, homodimer.

It is found in the cell inner membrane. It catalyses the reaction ATP + H2O + lipid A-core oligosaccharideSide 1 = ADP + phosphate + lipid A-core oligosaccharideSide 2.. Involved in lipopolysaccharide (LPS) biosynthesis. Translocates lipid A-core from the inner to the outer leaflet of the inner membrane. Transmembrane domains (TMD) form a pore in the inner membrane and the ATP-binding domain (NBD) is responsible for energy generation. The chain is ATP-dependent lipid A-core flippase from Escherichia coli O6:K15:H31 (strain 536 / UPEC).